We begin with the raw amino-acid sequence, 342 residues long: Nucleoid-associated protein Shewmr4_2217 (342 aa).

This sequence belongs to the YejK family.

Its subcellular location is the cytoplasm. The protein localises to the nucleoid. This is Nucleoid-associated protein Shewmr4_2217 from Shewanella sp. (strain MR-4).